A 380-amino-acid polypeptide reads, in one-letter code: MAPNIRKSHPLLKMVNNSLIDLPAPSNISAWWNFGSLLGICLLTQILTGLLLAMHYTADTTLAFSSVAHTCRNVQYGWLIRNLHANGASFFFICIYLHIGRGFYYGSYLYKETWNTGVILLLTLMATAFVGYVLPWGQMSFWGATVITNLFSAIPYIGQTLVEWAWGGFSVDNPTLTRFFALHFLLPFMIAGLTLIHLTFLHESGSNNSLGIVSNCDKIPFHPYFTLKDILGFMLMLLPLTTLALFSPNLLGDPENFTPANPLVTPPHIKPEWYFLFAYAILRSIPNKLGGVLALAASVLVLFLAPFLHKAKQRAMTFRPLSQLLFWILVANLFILTWVGSQPVEHPFIIIGQLASITYFTILLILFPITGALENKMLNY.

The next 4 membrane-spanning stretches (helical) occupy residues 34 to 54 (FGSL…LLAM), 78 to 99 (WLIR…YLHI), 114 to 134 (WNTG…GYVL), and 179 to 199 (FFAL…IHLT). Heme b-binding residues include His-84 and His-98. Heme b contacts are provided by His-183 and His-197. An a ubiquinone-binding site is contributed by His-202. 4 helical membrane-spanning segments follow: residues 227 to 247 (LKDI…ALFS), 289 to 309 (LGGV…PFLH), 321 to 341 (LSQL…WVGS), and 348 to 368 (FIII…ILFP).

Belongs to the cytochrome b family. In terms of assembly, the cytochrome bc1 complex contains 11 subunits: 3 respiratory subunits (MT-CYB, CYC1 and UQCRFS1), 2 core proteins (UQCRC1 and UQCRC2) and 6 low-molecular weight proteins (UQCRH/QCR6, UQCRB/QCR7, UQCRQ/QCR8, UQCR10/QCR9, UQCR11/QCR10 and a cleavage product of UQCRFS1). This cytochrome bc1 complex then forms a dimer. The cofactor is heme b.

It localises to the mitochondrion inner membrane. Functionally, component of the ubiquinol-cytochrome c reductase complex (complex III or cytochrome b-c1 complex) that is part of the mitochondrial respiratory chain. The b-c1 complex mediates electron transfer from ubiquinol to cytochrome c. Contributes to the generation of a proton gradient across the mitochondrial membrane that is then used for ATP synthesis. This Ardenna tenuirostris (Short-tailed shearwater) protein is Cytochrome b (MT-CYB).